A 364-amino-acid polypeptide reads, in one-letter code: Aminomethyltransferase (364 aa).

Belongs to the GcvT family. The glycine cleavage system is composed of four proteins: P, T, L and H.

It carries out the reaction N(6)-[(R)-S(8)-aminomethyldihydrolipoyl]-L-lysyl-[protein] + (6S)-5,6,7,8-tetrahydrofolate = N(6)-[(R)-dihydrolipoyl]-L-lysyl-[protein] + (6R)-5,10-methylene-5,6,7,8-tetrahydrofolate + NH4(+). Its function is as follows. The glycine cleavage system catalyzes the degradation of glycine. The chain is Aminomethyltransferase from Shewanella pealeana (strain ATCC 700345 / ANG-SQ1).